The sequence spans 252 residues: NAD(P)H-quinone oxidoreductase subunit K (252 aa).

Residues cysteine 73, cysteine 74, cysteine 138, and cysteine 169 each contribute to the [4Fe-4S] cluster site. The span at 225 to 236 (ASTQKQALSPSQ) shows a compositional bias: polar residues. Residues 225 to 252 (ASTQKQALSPSQEIPLEDQNEATKEIAQ) form a disordered region.

This sequence belongs to the complex I 20 kDa subunit family. NDH-1 can be composed of about 15 different subunits; different subcomplexes with different compositions have been identified which probably have different functions. The cofactor is [4Fe-4S] cluster.

Its subcellular location is the cellular thylakoid membrane. It carries out the reaction a plastoquinone + NADH + (n+1) H(+)(in) = a plastoquinol + NAD(+) + n H(+)(out). The enzyme catalyses a plastoquinone + NADPH + (n+1) H(+)(in) = a plastoquinol + NADP(+) + n H(+)(out). NDH-1 shuttles electrons from an unknown electron donor, via FMN and iron-sulfur (Fe-S) centers, to quinones in the respiratory and/or the photosynthetic chain. The immediate electron acceptor for the enzyme in this species is believed to be plastoquinone. Couples the redox reaction to proton translocation, and thus conserves the redox energy in a proton gradient. Cyanobacterial NDH-1 also plays a role in inorganic carbon-concentration. This Prochlorococcus marinus (strain MIT 9211) protein is NAD(P)H-quinone oxidoreductase subunit K.